An 85-amino-acid chain; its full sequence is MKTFINKKVSLNKRITFRRRRRKPVQPGERIDYKNLRLLCRFVSKQAKILSRRVSRLTSKQQRTVARYIKSARVLAFMPFVNNET.

It belongs to the bacterial ribosomal protein bS18 family. In terms of assembly, part of the 30S ribosomal subunit.

Its subcellular location is the plastid. It localises to the chloroplast. This Zygnema circumcarinatum (Green alga) protein is Small ribosomal subunit protein bS18c.